We begin with the raw amino-acid sequence, 585 residues long: Lipoprotein LpqB (585 aa).

Positions 1-18 (MKRLLTVLVVGLVALVSG) are cleaved as a signal peptide. The N-palmitoyl cysteine moiety is linked to residue Cys-19. Cys-19 carries S-diacylglycerol cysteine lipidation. Residues 24-46 (SSSSPQAIGTVERPAPPSLPKPT) form a disordered region. Residues 37-46 (PAPPSLPKPT) are compositionally biased toward pro residues.

It belongs to the LpqB lipoprotein family. In terms of assembly, interacts with MtrB, probably extracytoplasmically via its sensor domain.

The protein localises to the cell membrane. It is found in the secreted. It localises to the cell wall. May modulate activity of the MtrAB system in controlling homeostasis of the cell wall and cell division. This is Lipoprotein LpqB from Mycolicibacterium smegmatis (strain ATCC 700084 / mc(2)155) (Mycobacterium smegmatis).